An 845-amino-acid polypeptide reads, in one-letter code: P protein (845 aa).

The interval 1-57 (MRLENREGRPTSGVLEMELPQASAPSRAGLGSLGLVGLDSSNHRPQQGGSKAGSRGP) is disordered. Residues 1 to 183 (MRLENREGRP…HLSKLRCCVQ (183 aa)) are Extracellular-facing. A compositionally biased stretch (low complexity) spans 26 to 40 (SRAGLGSLGLVGLDS). Residues 184–204 (WLKVSGLFVFVVLCSILFSLY) traverse the membrane as a helical segment. Residues 205-337 (PDQGKFWQLL…QYLRASIEAQ (133 aa)) lie on the Cytoplasmic side of the membrane. The chain crosses the membrane as a helical span at residues 338–358 (VTIAAVILAGVYVLIIFEIVH). Residues 359-360 (RT) are Extracellular-facing. The chain crosses the membrane as a helical span at residues 361–381 (LAAMLGSLAALAALAVIGDRP). At 382 to 393 (TLTQVVEWIDFE) the chain is on the cytoplasmic side. Residues 394–414 (TLALLFGMMILVAIFSETGFF) form a helical membrane-spanning segment. Topologically, residues 415–429 (DYCAVKAYQLSRGRV) are extracellular. Residues 430–450 (WAMIIMLCLIAAVLSAFLDNV) traverse the membrane as a helical segment. Over 451–513 (TTALLFTPVT…ELRKMGLDFA (63 aa)) the chain is Cytoplasmic. A helical transmembrane segment spans residues 514–534 (GFTAHMFAGICFVLLFSFPLL). Residues 535-629 (RLLYWNRKLY…KKHRISDRTL (95 aa)) lie on the Extracellular side of the membrane. Residues 630–650 (LTKCVTVLGLVIFMFFLNSFV) traverse the membrane as a helical segment. Residue Pro651 is a topological domain, cytoplasmic. Residues 652-672 (GVHLDLGWIAILGAIWLLILA) form a helical membrane-spanning segment. The Extracellular segment spans residues 673–687 (DIHDFEIILHRVEWA). The chain crosses the membrane as a helical span at residues 688 to 708 (TLLFFAALFILMEALAHLHLI). Residues 709–730 (EYVGEQTALLIKMVPEDQRLAA) lie on the Cytoplasmic side of the membrane. A helical transmembrane segment spans residues 731-751 (AIIVVVWVSAIASSLIDNIPF). Residues 752–773 (TATMIPVLLNLSRDPEISLPAP) are Extracellular-facing. The helical transmembrane segment at 774–794 (PLMYALALGACLGGNGTLIGA) threads the bilayer. Topologically, residues 795–820 (SANVVCAGIAEQHGYGFSFMEFFRLG) are cytoplasmic. The chain crosses the membrane as a helical span at residues 821–841 (FPMMVVSCMVGMCYLLVAHVV). Residues 842 to 845 (MGWN) are Extracellular-facing.

Belongs to the CitM (TC 2.A.11) transporter family.

It localises to the melanosome membrane. The catalysed reaction is chloride(in) = chloride(out). Functionally, contributes to a melanosome-specific anion (chloride) current that modulates melanosomal pH for optimal tyrosinase activity required for melanogenesis and the melanosome maturation. One of the components of the mammalian pigmentary system. May serve as a key control point at which ethnic skin color variation is determined. Major determinant of brown and/or blue eye color. Seems to regulate the post-translational processing of tyrosinase, which catalyzes the limiting reaction in melanin synthesis. This chain is P protein (Oca2), found in Sus scrofa (Pig).